The sequence spans 173 residues: Adenine phosphoribosyltransferase (173 aa).

It belongs to the purine/pyrimidine phosphoribosyltransferase family. In terms of assembly, homodimer.

The protein localises to the cytoplasm. The catalysed reaction is AMP + diphosphate = 5-phospho-alpha-D-ribose 1-diphosphate + adenine. Its pathway is purine metabolism; AMP biosynthesis via salvage pathway; AMP from adenine: step 1/1. In terms of biological role, catalyzes a salvage reaction resulting in the formation of AMP, that is energically less costly than de novo synthesis. The protein is Adenine phosphoribosyltransferase of Thermotoga maritima (strain ATCC 43589 / DSM 3109 / JCM 10099 / NBRC 100826 / MSB8).